Reading from the N-terminus, the 779-residue chain is Acyl-homoserine lactone acylase PvdQ (779 aa).

A signal peptide spans 1–25 (MIISRPLCGFVFAGLSFAVILPAQA). A propeptide spans 202–223 (SQQVQALQLAAVRNQRFALERG) (spacer peptide). Ser-224 functions as the Nucleophile in the catalytic mechanism. Over residues 731-746 (ESSNPQSAHSSDQTEA) the composition is skewed to polar residues. Residues 731 to 752 (ESSNPQSAHSSDQTEAFSKKQW) form a disordered region.

It belongs to the peptidase S45 family. Heterodimer of an alpha subunit and a beta subunit processed from the same precursor.

The protein localises to the periplasm. The catalysed reaction is an N-acyl-L-homoserine lactone + H2O = L-homoserine lactone + a carboxylate. Catalyzes the deacylation of acyl-homoserine lactone (AHL or acyl-HSL), releasing homoserine lactone (HSL) and the corresponding fatty acid. Possesses a specificity for the degradation of long-chain acyl-HSLs (side chains of 11 to 14 carbons in length). The chain is Acyl-homoserine lactone acylase PvdQ (pvdQ) from Pseudomonas savastanoi pv. phaseolicola (strain 1448A / Race 6) (Pseudomonas syringae pv. phaseolicola (strain 1448A / Race 6)).